We begin with the raw amino-acid sequence, 591 residues long: DDB1- and CUL4-associated factor 8 (591 aa).

The span at 1-14 (MSSKRPSTDGRRDL) shows a compositional bias: basic and acidic residues. Residues 1–140 (MSSKRPSTDG…EDWVSSETTA (140 aa)) form a disordered region. 2 positions are modified to phosphoserine: serine 21 and serine 22. Residues 39–50 (IEVEASDLSLSL) carry the Nuclear export signal motif. 2 stretches are compositionally biased toward basic and acidic residues: residues 65–99 (RGTD…HGHS) and 118–131 (SRDQ…RALE). Residues serine 99, serine 123, and serine 124 each carry the phosphoserine modification. WD repeat units lie at residues 185-224 (GHTG…PVLD), 228-269 (GHKS…CCKN), 275-315 (QHKG…PASK), 323-363 (EKKV…ENEN), 379-418 (ESKA…GAQY), 426-466 (RNNA…IIQF), and 470-509 (DKGG…STEL). Arginine 198 bears the Omega-N-methylarginine; by PRMT1 mark. The tract at residues 552–591 (HRRWREPGVGATDADSDESPSSSDTSDEEEGPDRVQCMPS) is disordered.

This sequence belongs to the WD repeat DCAF8 family. Interacts with DDB1, CUL4A and CUL4B. Interacts with KPNA1, KPNB1 and XPO1.

It is found in the nucleus. Its subcellular location is the cytoplasm. Its pathway is protein modification; protein ubiquitination. Functionally, may function as a substrate receptor for CUL4-DDB1 E3 ubiquitin-protein ligase complex. This is DDB1- and CUL4-associated factor 8 (Dcaf8) from Rattus norvegicus (Rat).